A 92-amino-acid polypeptide reads, in one-letter code: MPRSLKKGPFIDVSLLKKVEKAVKINDKKPLKTWSRRSTVFPNMVGLTISVHNGRHHIPIFITEEMVGHKLGEFSLTRTYRGHTADKKVKKR.

The protein belongs to the universal ribosomal protein uS19 family.

Functionally, protein S19 forms a complex with S13 that binds strongly to the 16S ribosomal RNA. The chain is Small ribosomal subunit protein uS19 from Buchnera aphidicola subsp. Schizaphis graminum (strain Sg).